A 491-amino-acid chain; its full sequence is Iota-carrageenase (491 aa).

Residues 1–23 (MRLYFRKLWLTNLFLGGALASSA) form the signal peptide. Disulfide bonds link Cys269–Cys298, Cys336–Cys360, Cys408–Cys476, and Cys412–Cys484.

It belongs to the glycosyl hydrolase 82 family.

The protein localises to the secreted. The catalysed reaction is Endohydrolysis of 1,4-beta-D-linkages between D-galactose 4-sulfate and 3,6-anhydro-D-galactose-2-sulfate in iota-carrageenans.. In terms of biological role, hydrolyzes iota-carrageenans, sulfated 1,3-alpha-1,4-beta galactans from red algal cell walls, with an inversion of anomeric configuration. Also active against hybrid iota-/nu-carrageenan, not active against kappa- or lambda-carrageenans. In Alteromonas macleodii (Pseudoalteromonas macleodii), this protein is Iota-carrageenase.